The primary structure comprises 103 residues: Large ribosomal subunit protein bL21 (103 aa).

It belongs to the bacterial ribosomal protein bL21 family. Part of the 50S ribosomal subunit. Contacts protein L20.

In terms of biological role, this protein binds to 23S rRNA in the presence of protein L20. This chain is Large ribosomal subunit protein bL21, found in Desulfitobacterium hafniense (strain DSM 10664 / DCB-2).